The primary structure comprises 419 residues: WD repeat-containing protein JIP5 (419 aa).

WD repeat units follow at residues A4 to S45, P66 to R105, R108 to A147, D180 to E220, D224 to A263, G268 to G308, and D351 to P390. The segment at D172 to E192 is disordered. The tract at residues S372–D408 is disordered. The segment covering T392–K404 has biased composition (basic residues).

This sequence belongs to the WD repeat WDR55 family.

The protein resides in the nucleus. The protein localises to the nucleolus. The polypeptide is WD repeat-containing protein JIP5 (JIP5) (Malassezia globosa (strain ATCC MYA-4612 / CBS 7966) (Dandruff-associated fungus)).